We begin with the raw amino-acid sequence, 79 residues long: Spidroin-1 (79 aa).

The protein belongs to the silk fibroin family. As to quaternary structure, major subunit, with spidroin 2, of the dragline silk.

The protein localises to the secreted. It localises to the extracellular space. Its function is as follows. Spiders' major ampullate silk possesses unique characteristics of strength and elasticity. Fibroin consists of pseudocrystalline regions of antiparallel beta-sheet interspersed with elastic amorphous segments. The sequence is that of Spidroin-1 from Araneus bicentenarius (Giant lichen orbweaver).